A 35-amino-acid chain; its full sequence is Conotoxin Cal6.1d (35 aa).

Positions 1–8 (GLTRPSKR) are excised as a propeptide. Cystine bridges form between Cys-9-Cys-25, Cys-16-Cys-29, and Cys-24-Cys-34.

The protein belongs to the conotoxin O1 superfamily. In terms of tissue distribution, expressed by the venom duct.

The protein resides in the secreted. Probable neurotoxin with unknown target. Possibly targets ion channels. The chain is Conotoxin Cal6.1d from Californiconus californicus (California cone).